The following is a 326-amino-acid chain: Vitamin B12 import system permease protein BtuC (326 aa).

Transmembrane regions (helical) follow at residues 15–35 (WLLS…CAGE), 61–81 (LAVL…QALF), 88–108 (PGLL…VLLG), 112–132 (LPGW…TLIL), 146–166 (LLAG…AIYF), 184–204 (GGVD…LIWI), 240–260 (GWMV…GLVI), 274–294 (VLLP…DVVA), and 302–322 (ELPI…WLLL).

This sequence belongs to the binding-protein-dependent transport system permease family. FecCD subfamily. In terms of assembly, the complex is composed of two ATP-binding proteins (BtuD), two transmembrane proteins (BtuC) and a solute-binding protein (BtuF).

It is found in the cell inner membrane. Part of the ABC transporter complex BtuCDF involved in vitamin B12 import. Involved in the translocation of the substrate across the membrane. This is Vitamin B12 import system permease protein BtuC from Salmonella choleraesuis (strain SC-B67).